The following is a 244-amino-acid chain: 1-(5-phosphoribosyl)-5-[(5-phosphoribosylamino)methylideneamino] imidazole-4-carboxamide isomerase (244 aa).

The active-site Proton acceptor is Asp10. Asp132 (proton donor) is an active-site residue.

Belongs to the HisA/HisF family.

The protein resides in the cytoplasm. It catalyses the reaction 1-(5-phospho-beta-D-ribosyl)-5-[(5-phospho-beta-D-ribosylamino)methylideneamino]imidazole-4-carboxamide = 5-[(5-phospho-1-deoxy-D-ribulos-1-ylimino)methylamino]-1-(5-phospho-beta-D-ribosyl)imidazole-4-carboxamide. It participates in amino-acid biosynthesis; L-histidine biosynthesis; L-histidine from 5-phospho-alpha-D-ribose 1-diphosphate: step 4/9. The polypeptide is 1-(5-phosphoribosyl)-5-[(5-phosphoribosylamino)methylideneamino] imidazole-4-carboxamide isomerase (Xanthomonas campestris pv. campestris (strain 8004)).